We begin with the raw amino-acid sequence, 470 residues long: Asparagine--tRNA ligase (470 aa).

It belongs to the class-II aminoacyl-tRNA synthetase family. In terms of assembly, homodimer.

The protein resides in the cytoplasm. It carries out the reaction tRNA(Asn) + L-asparagine + ATP = L-asparaginyl-tRNA(Asn) + AMP + diphosphate + H(+). The sequence is that of Asparagine--tRNA ligase from Blochmanniella pennsylvanica (strain BPEN).